Reading from the N-terminus, the 301-residue chain is Triplex capsid protein 2 (301 aa).

It belongs to the herpesviridae TRX2 protein family. As to quaternary structure, interacts with TRX1 and major capisd protein/MCP.

The protein localises to the virion. Its subcellular location is the host nucleus. Functionally, structural component of the T=16 icosahedral capsid. The capsid is composed of pentamers and hexamers of major capsid protein/MCP, which are linked together by heterotrimers called triplexes. These triplexes are formed by a single molecule of triplex protein 1/TRX1 and two copies of triplex protein 2/TRX2. Additionally, TRX1 is required for efficient transport of TRX2 to the nucleus, which is the site of capsid assembly. This is Triplex capsid protein 2 from Homo sapiens (Human).